The primary structure comprises 353 residues: uncharacterized protein (353 aa).

In terms of domain architecture, HTH luxR-type spans 18–83 (NIEFPCLLSE…TLWRDVFLRF (66 aa)). Residues 42–61 (VNEISKRRNRSIKTVSCQKM) constitute a DNA-binding region (H-T-H motif). The EAL domain occupies 98–350 (NSSVLPVVSS…AFVRKLLASL (253 aa)).

This is an uncharacterized protein from Escherichia coli (strain K12).